Here is a 192-residue protein sequence, read N- to C-terminus: Large ribosomal subunit protein bL25 (192 aa).

This sequence belongs to the bacterial ribosomal protein bL25 family. CTC subfamily. As to quaternary structure, part of the 50S ribosomal subunit; part of the 5S rRNA/L5/L18/L25 subcomplex. Contacts the 5S rRNA. Binds to the 5S rRNA independently of L5 and L18.

In terms of biological role, this is one of the proteins that binds to the 5S RNA in the ribosome where it forms part of the central protuberance. This is Large ribosomal subunit protein bL25 from Porphyromonas gingivalis (strain ATCC 33277 / DSM 20709 / CIP 103683 / JCM 12257 / NCTC 11834 / 2561).